A 149-amino-acid chain; its full sequence is Calmodulin (149 aa).

A2 carries the N-acetylalanine modification. EF-hand domains are found at residues 8–43 (EQIA…LGQN), 44–79 (PTEA…KMKD), 81–116 (DSEE…LGEK), and 117–149 (LTDE…MMSK). Ca(2+) contacts are provided by D21, D23, D25, T27, E32, D57, D59, N61, T63, E68, D94, D96, N98, and E105. The residue at position 116 (K116) is an N6,N6,N6-trimethyllysine. Ca(2+) contacts are provided by D130, D132, D134, Q136, and E141.

Belongs to the calmodulin family.

Calmodulin mediates the control of a large number of enzymes, ion channels and other proteins by Ca(2+). Among the enzymes to be stimulated by the calmodulin-Ca(2+) complex are a number of protein kinases and phosphatases. The polypeptide is Calmodulin (cam) (Saccharina japonica (Sweet kelp)).